An 84-amino-acid polypeptide reads, in one-letter code: MPIIKSAIERVKTNNKANVRNTAQMSAMRTAVKKFEAAKTAGADNVDDLYLAATSAVDKAASKGLIKRNKAARDKSRMAARYAK.

The protein belongs to the bacterial ribosomal protein bS20 family.

Binds directly to 16S ribosomal RNA. This chain is Small ribosomal subunit protein bS20, found in Lactiplantibacillus plantarum (strain ATCC BAA-793 / NCIMB 8826 / WCFS1) (Lactobacillus plantarum).